The following is a 435-amino-acid chain: Trigger factor (435 aa).

The region spanning 164-249 is the PPIase FKBP-type domain; that stretch reads GDFAKFDFEG…LHEIQGKKAG (86 aa).

This sequence belongs to the FKBP-type PPIase family. Tig subfamily.

The protein localises to the cytoplasm. It catalyses the reaction [protein]-peptidylproline (omega=180) = [protein]-peptidylproline (omega=0). Functionally, involved in protein export. Acts as a chaperone by maintaining the newly synthesized protein in an open conformation. Functions as a peptidyl-prolyl cis-trans isomerase. The chain is Trigger factor from Campylobacter fetus subsp. fetus (strain 82-40).